Consider the following 131-residue polypeptide: Small ribosomal subunit protein uS9 (131 aa).

Belongs to the universal ribosomal protein uS9 family.

This is Small ribosomal subunit protein uS9 from Glaesserella parasuis serovar 5 (strain SH0165) (Haemophilus parasuis).